Reading from the N-terminus, the 245-residue chain is Probable metal transport system ATP-binding protein CPn_0542/CP_0210/CPj0542/CpB0563 (245 aa).

Residues 5–240 (ILAEGLAFRY…CCHPYKNQEF (236 aa)) enclose the ABC transporter domain. ATP is bound at residue 39–46 (GPNGGGKS).

The protein belongs to the ABC transporter superfamily.

The protein localises to the cell inner membrane. In terms of biological role, part of an ATP-driven transport system CPn0541/CPn0542/CPn0543 for a metal. Probably responsible for energy coupling to the transport system. The chain is Probable metal transport system ATP-binding protein CPn_0542/CP_0210/CPj0542/CpB0563 from Chlamydia pneumoniae (Chlamydophila pneumoniae).